Here is a 355-residue protein sequence, read N- to C-terminus: Squamosa promoter-binding protein-like 15 (355 aa).

The tract at residues 1-27 is disordered; it reads MELLKGSGLNQTESGGSSSTESSSLSG. Low complexity predominate over residues 12 to 27; sequence TESGGSSSTESSSLSG. The SBP-type zinc finger occupies 61–138; the sequence is TARCQVEGCR…ACHNERRRKP (78 aa). The Zn(2+) site is built by C64, C69, C86, H89, C105, C108, H112, and C124. Positions 121–137 match the Bipartite nuclear localization signal motif; it reads KRSCRRRLACHNERRRK.

It localises to the nucleus. Probable transcription factor required for the flowering response to vernalization in the shoot apical meristem (SAM). Defines the competence of shoot meristems to flower in response to vernalization in perennials. In Arabis alpina (Alpine rock-cress), this protein is Squamosa promoter-binding protein-like 15.